Consider the following 407-residue polypeptide: Phosphopentomutase (407 aa).

6 residues coordinate Mn(2+): aspartate 10, aspartate 306, histidine 311, aspartate 347, histidine 348, and histidine 359.

Belongs to the phosphopentomutase family. Requires Mn(2+) as cofactor.

Its subcellular location is the cytoplasm. The enzyme catalyses 2-deoxy-alpha-D-ribose 1-phosphate = 2-deoxy-D-ribose 5-phosphate. It carries out the reaction alpha-D-ribose 1-phosphate = D-ribose 5-phosphate. It participates in carbohydrate degradation; 2-deoxy-D-ribose 1-phosphate degradation; D-glyceraldehyde 3-phosphate and acetaldehyde from 2-deoxy-alpha-D-ribose 1-phosphate: step 1/2. Isomerase that catalyzes the conversion of deoxy-ribose 1-phosphate (dRib-1-P) and ribose 1-phosphate (Rib-1-P) to deoxy-ribose 5-phosphate (dRib-5-P) and ribose 5-phosphate (Rib-5-P), respectively. This chain is Phosphopentomutase, found in Salmonella dublin (strain CT_02021853).